Consider the following 216-residue polypeptide: TATA-box-binding protein-like 1 (216 aa).

2 tandem repeats follow at residues 38-121 (KPVI…QRLG) and 126-210 (FNHF…ILLQ).

Belongs to the TBP family.

It is found in the nucleus. TATA box-binding transcription factor. Members of the TBP family are differentially required to regulate transcription and development during early embryogenesis. This Entamoeba histolytica (strain ATCC 30459 / HM-1:IMSS / ABRM) protein is TATA-box-binding protein-like 1 (trf1).